The sequence spans 468 residues: 3-isopropylmalate dehydratase large subunit (468 aa).

Positions 347, 407, and 410 each coordinate [4Fe-4S] cluster.

It belongs to the aconitase/IPM isomerase family. LeuC type 1 subfamily. In terms of assembly, heterodimer of LeuC and LeuD. It depends on [4Fe-4S] cluster as a cofactor.

The enzyme catalyses (2R,3S)-3-isopropylmalate = (2S)-2-isopropylmalate. The protein operates within amino-acid biosynthesis; L-leucine biosynthesis; L-leucine from 3-methyl-2-oxobutanoate: step 2/4. Catalyzes the isomerization between 2-isopropylmalate and 3-isopropylmalate, via the formation of 2-isopropylmaleate. This Rippkaea orientalis (strain PCC 8801 / RF-1) (Cyanothece sp. (strain PCC 8801)) protein is 3-isopropylmalate dehydratase large subunit.